The following is a 396-amino-acid chain: Phosphoglycerate kinase (396 aa).

Residues 21–23, arginine 36, 59–62, arginine 119, and arginine 156 contribute to the substrate site; these read DFN and HLGK. Residues lysine 206, glycine 294, glutamate 325, and 352-355 contribute to the ATP site; that span reads GGDS.

It belongs to the phosphoglycerate kinase family. Monomer.

The protein localises to the cytoplasm. It carries out the reaction (2R)-3-phosphoglycerate + ATP = (2R)-3-phospho-glyceroyl phosphate + ADP. It functions in the pathway carbohydrate degradation; glycolysis; pyruvate from D-glyceraldehyde 3-phosphate: step 2/5. This Listeria monocytogenes serotype 4a (strain HCC23) protein is Phosphoglycerate kinase.